A 273-amino-acid chain; its full sequence is Terpene cyclase ascF (273 aa).

The next 7 helical transmembrane spans lie at 18 to 38, 49 to 69, 78 to 98, 113 to 133, 153 to 173, 178 to 198, and 217 to 237; these read VYEA…ILIA, MPLF…LWVV, MTIW…HGVL, ILVG…SWWI, YWAV…MLCV, GGVS…GLNM, and APAV…GFVL.

This sequence belongs to the paxB family.

The protein localises to the membrane. The enzyme catalyses ilicicolin A epoxide = ilicicolin C. Its pathway is secondary metabolite biosynthesis; terpenoid biosynthesis. Functionally, terpene cyclase; part of the asc-1 gene cluster that mediates the biosynthesis of both ascochlorin and ascofuranone, a strong inhibitor of cyanide-insensitive alternative oxidases and a promising drug candidate against African trypanosomiasis. The first step in the pathway is performed by the non-reducing polyketide synthase ascC that produces orsellinic acid by condensing acetyl-CoA with 3 malonyl-CoA units. Orsellinic acid is then prenylated by the prenyltransferase ascA to yield ilicicolinic acid B. Ilicicolinic acid B is further reduced to ilicicolin B by the reductase ascB. The halogenase ascD then chlorinates ilicicolin B to produce ilicicolin A which is converted to ilicicolin A epoxide by the cytochrome P450 monooxygenase ascE that catalyzes stereoselective epoxidation of the terminal double bond of the prenyl group. Ilicicolin A epoxide is the last common precursor for the biosynthesis of ascofuranone and ascochlorin. The terpene cyclase ascF produces a monocyclic terpene, and the cyclization reaction is proposed to be initiated by protonation of the terminal epoxide of ilicicolin A epoxide to generate a monocyclic tertiarycation, which is followed by a series of hydride and methyl shifts with abstraction of proton, leading to the formation of the (14S,15R,19R)-trimethylcyclohexanone ring structure of ilicicolin C, which is finally reduced to ascochlorin by the dehydrogenase ascG. On the other hand, ilicicolin A epoxide is hydroxylated by the cytochrome P450 monooxygenase ascH, and the resultant product is cyclized by the terpene cyclase ascI to ascofuranol via protonation-initiated epoxide ring opening, which facilitates the 6-endo-tet cyclization to form the tetrahy-drofuran ring. Finally, ascofuranol is oxidized into ascofuranone by ascJ. The chain is Terpene cyclase ascF from Acremonium egyptiacum (Oospora egyptiaca).